A 243-amino-acid polypeptide reads, in one-letter code: Voltage-gated monoatomic cation channel TMEM109 (243 aa).

A signal peptide spans 1–33 (MAASSISSPWGKHVFKAILMVLVALILLHSALA). Residues 34 to 83 (QSRRDFAPPGQQKREAPVDVLTQIGRSVRGTLDAWIGPETMHLVSESSSQ) lie on the Lumenal side of the membrane. A helical transmembrane segment spans residues 84–104 (VLWAISSAISVAFFALSGIAA). Residues 105-135 (QLLNALGLAGDYLAQGLKLSPGQVQTFLLWG) lie on the Cytoplasmic side of the membrane. Residues 136–156 (AGALVVYWLLSLLLGLVLALL) form a helical membrane-spanning segment. The Lumenal portion of the chain corresponds to 157–185 (GRILWGLKLVIFLAGFVALMRSVPDPSTR). Residues 186–205 (ALLLLALLILYALLSRLTGS) traverse the membrane as a helical segment. Over 206–243 (RASGAQLEAKVRGLERQVEELRWRQRRAAKGARSVEEE) the chain is Cytoplasmic.

Homooligomer. Interacts with CRYAB; in the cellular response to DNA damage.

The protein localises to the nucleus outer membrane. It is found in the endoplasmic reticulum membrane. It localises to the sarcoplasmic reticulum membrane. The enzyme catalyses K(+)(in) = K(+)(out). It catalyses the reaction Ca(2+)(in) = Ca(2+)(out). Functionally, functions as a voltage-gated monoatomic cation channel permeable to both potassium and calcium. Plays a role in the cellular response to DNA damage. The polypeptide is Voltage-gated monoatomic cation channel TMEM109 (Homo sapiens (Human)).